Consider the following 141-residue polypeptide: Ribonuclease P protein component (141 aa).

Belongs to the RnpA family. Consists of a catalytic RNA component (M1 or rnpB) and a protein subunit.

The catalysed reaction is Endonucleolytic cleavage of RNA, removing 5'-extranucleotides from tRNA precursor.. In terms of biological role, RNaseP catalyzes the removal of the 5'-leader sequence from pre-tRNA to produce the mature 5'-terminus. It can also cleave other RNA substrates such as 4.5S RNA. The protein component plays an auxiliary but essential role in vivo by binding to the 5'-leader sequence and broadening the substrate specificity of the ribozyme. This is Ribonuclease P protein component from Onion yellows phytoplasma (strain OY-M).